A 315-amino-acid chain; its full sequence is Ankyrin repeat domain-containing protein SOWAHD (315 aa).

Positions 1-39 (MAQLGGAANRAPTASLAPTSQSLRCAPQPRPSRADTGSL) are disordered. ANK repeat units follow at residues 112–141 (PREHAWILAAAEGRYEVLRELLEAEPELLL), 147–162 (TGYSVLHWLAKHGRHE), and 186–216 (GGLTPLHLAALQGHDMVIKVLVGALGADATR).

The protein belongs to the SOWAH family.

In Homo sapiens (Human), this protein is Ankyrin repeat domain-containing protein SOWAHD (SOWAHD).